Here is a 332-residue protein sequence, read N- to C-terminus: Abl interactor homolog (332 aa).

Positions His73 to Asp104 form a coiled coil. Residues Ser152–Met332 form a disordered region. Residues Asn164–Gly206 are compositionally biased toward low complexity. Pro residues predominate over residues Ala221–Ser247. Positions Gln248 to Ala257 are enriched in polar residues. Residues Leu277–Arg314 are compositionally biased toward pro residues.

Belongs to the ABI family. Part of a Scar/WAVE complex containing brk1, scrA, abiA, pirA and napA. Interacts with scrA.

Its function is as follows. Involved in regulation of actin and microtubule organization. Required for proper cytokinesis. The polypeptide is Abl interactor homolog (abiA) (Dictyostelium discoideum (Social amoeba)).